A 246-amino-acid chain; its full sequence is 2,5-diamino-6-ribosylamino-4(3H)-pyrimidinone 5'-phosphate reductase (246 aa).

NADP(+)-binding positions include Thr78, Asp82, Leu163, and 186–190 (GAEVL).

It belongs to the HTP reductase family. In terms of assembly, homodimer.

It carries out the reaction 2,5-diamino-6-(1-D-ribitylamino)pyrimidin-4(3H)-one 5'-phosphate + NADP(+) = 2,5-diamino-6-(1-D-ribosylamino)pyrimidin-4(3H)-one 5'-phosphate + NADPH + H(+). It catalyses the reaction 2,5-diamino-6-(1-D-ribitylamino)pyrimidin-4(3H)-one 5'-phosphate + NAD(+) = 2,5-diamino-6-(1-D-ribosylamino)pyrimidin-4(3H)-one 5'-phosphate + NADH + H(+). Its pathway is cofactor biosynthesis; riboflavin biosynthesis. Its function is as follows. Catalyzes an early step in riboflavin biosynthesis, the NADPH-dependent reduction of the ribose side chain of 2,5-diamino-6-ribosylamino-4(3H)-pyrimidinone 5'-phosphate, yielding 2,5-diamino-6-ribitylamino-4(3H)-pyrimidinone 5'-phosphate. The protein is 2,5-diamino-6-ribosylamino-4(3H)-pyrimidinone 5'-phosphate reductase (RIB7) of Eremothecium gossypii (strain ATCC 10895 / CBS 109.51 / FGSC 9923 / NRRL Y-1056) (Yeast).